Reading from the N-terminus, the 481-residue chain is uncharacterized protein (481 aa).

Belongs to the UbiD family.

This is an uncharacterized protein from Archaeoglobus fulgidus (strain ATCC 49558 / DSM 4304 / JCM 9628 / NBRC 100126 / VC-16).